The chain runs to 191 residues: tRNA-specific adenosine deaminase 2 (191 aa).

Residues 20-145 enclose the CMP/dCMP-type deaminase domain; it reads EETEKWMEQA…SVLDIASADL (126 aa). Histidine 71 contributes to the Zn(2+) binding site. Glutamate 73 functions as the Proton donor in the catalytic mechanism. Positions 107 and 110 each coordinate Zn(2+).

Belongs to the cytidine and deoxycytidylate deaminase family. ADAT2 subfamily. Requires Zn(2+) as cofactor.

The catalysed reaction is adenosine(34) in tRNA + H2O + H(+) = inosine(34) in tRNA + NH4(+). Probably participates in deamination of adenosine-34 to inosine in many tRNAs. In Bos taurus (Bovine), this protein is tRNA-specific adenosine deaminase 2 (DEADC1).